The primary structure comprises 1132 residues: Tyrosine-protein kinase JAK2 (1132 aa).

The interval 1-239 (MGMACLTMTE…RYRFRRFIQQ (239 aa)) is interaction with cytokine/interferon/growth hormone receptors. One can recognise an FERM domain in the interval 37–380 (PVLLVYLYHS…GYYRLTADAH (344 aa)). Tyr119 carries the phosphotyrosine; by autocatalysis modification. A phosphotyrosine mark is found at Tyr372 and Tyr373. The 82-residue stretch at 401 to 482 (HGPISMDFAI…SLKDLLNCYQ (82 aa)) folds into the SH2; atypical domain. At Ser523 the chain carries Phosphoserine. Residues 545-809 (LIFNESLGQG…AIIRDLNSLF (265 aa)) form the Protein kinase 1 domain. A phosphotyrosine mark is found at Tyr570 and Tyr813. In terms of domain architecture, Protein kinase 2 spans 849-1126 (LKFLQQLGKG…RDLALRVDQI (278 aa)). 855 to 863 (LGKGNFGSV) is an ATP binding site. Tyr868 is modified (phosphotyrosine; by autocatalysis). Lys882 is an ATP binding site. 2 positions are modified to phosphotyrosine; by autocatalysis: Tyr966 and Tyr972. Asp976 (proton acceptor) is an active-site residue. Phosphotyrosine; by autocatalysis occurs at positions 1007 and 1008.

The protein belongs to the protein kinase superfamily. Tyr protein kinase family. JAK subfamily. As to quaternary structure, interacts with IL23R, SKB1 and STAM2. Interacts with EPOR. Interacts with LYN. Interacts with SIRPA. Interacts with SH2B1. Interacts with TEC. Interacts with IFNGR2 (via intracellular domain). Interacts with LEPR (Isoform B). Interacts with HSP90AB1; promotes functional activation in a heat shock-dependent manner. Interacts with STRA6. Interacts with RHEX; this interaction occurs in a erythropoietin (EPO)-dependent manner. Interacts with ASB2; the interaction targets JAK2 for Notch-induced proteasomal degradation. The cofactor is Mg(2+). Post-translationally, autophosphorylated, leading to regulate its activity. Leptin promotes phosphorylation on tyrosine residues, including phosphorylation on Tyr-813. Autophosphorylation on Tyr-119 in response to EPO down-regulates its kinase activity. Autophosphorylation on Tyr-868, Tyr-966 and Tyr-972 in response to growth hormone (GH) are required for maximal kinase activity. Also phosphorylated by TEC. Phosphorylated on tyrosine residues in response to interferon gamma signaling. Phosphorylated on tyrosine residues in response to a signaling cascade that is activated by increased cellular retinol. Undergoes Notch-induced ubiquitination and subsequent proteasomal degradation which is mediated by ASB1 or ASB2, the substrate-recognition components of probable ECS E3 ubiquitin-protein ligase complexes.

It is found in the endomembrane system. Its subcellular location is the cytoplasm. The protein resides in the nucleus. The enzyme catalyses L-tyrosyl-[protein] + ATP = O-phospho-L-tyrosyl-[protein] + ADP + H(+). Its activity is regulated as follows. Regulated by autophosphorylation, can both activate or decrease activity. Heme regulates its activity by enhancing the phosphorylation on Tyr-1007 and Tyr-1008. Functionally, non-receptor tyrosine kinase involved in various processes such as cell growth, development, differentiation or histone modifications. Mediates essential signaling events in both innate and adaptive immunity. In the cytoplasm, plays a pivotal role in signal transduction via its association with type I receptors such as growth hormone (GHR), prolactin (PRLR), leptin (LEPR), erythropoietin (EPOR), thrombopoietin (THPO); or type II receptors including IFN-alpha, IFN-beta, IFN-gamma and multiple interleukins. Following ligand-binding to cell surface receptors, phosphorylates specific tyrosine residues on the cytoplasmic tails of the receptor, creating docking sites for STATs proteins. Subsequently, phosphorylates the STATs proteins once they are recruited to the receptor. Phosphorylated STATs then form homodimer or heterodimers and translocate to the nucleus to activate gene transcription. For example, cell stimulation with erythropoietin (EPO) during erythropoiesis leads to JAK2 autophosphorylation, activation, and its association with erythropoietin receptor (EPOR) that becomes phosphorylated in its cytoplasmic domain. Then, STAT5 (STAT5A or STAT5B) is recruited, phosphorylated and activated by JAK2. Once activated, dimerized STAT5 translocates into the nucleus and promotes the transcription of several essential genes involved in the modulation of erythropoiesis. Part of a signaling cascade that is activated by increased cellular retinol and that leads to the activation of STAT5 (STAT5A or STAT5B). In addition, JAK2 mediates angiotensin-2-induced ARHGEF1 phosphorylation. Plays a role in cell cycle by phosphorylating CDKN1B. Cooperates with TEC through reciprocal phosphorylation to mediate cytokine-driven activation of FOS transcription. In the nucleus, plays a key role in chromatin by specifically mediating phosphorylation of 'Tyr-41' of histone H3 (H3Y41ph), a specific tag that promotes exclusion of CBX5 (HP1 alpha) from chromatin. Up-regulates the potassium voltage-gated channel activity of KCNA3. The polypeptide is Tyrosine-protein kinase JAK2 (Pongo abelii (Sumatran orangutan)).